A 151-amino-acid chain; its full sequence is Arginine regulator (151 aa).

This sequence belongs to the ArgR family.

It localises to the cytoplasm. Its pathway is amino-acid degradation; L-arginine degradation via ADI pathway. Regulates the transcription of the arc operon, involved in arginine catabolism. The protein is Arginine regulator (argR1) of Clostridium perfringens (strain 13 / Type A).